The following is a 260-amino-acid chain: UPF0246 protein Bamb_2261 (260 aa).

Belongs to the UPF0246 family.

The chain is UPF0246 protein Bamb_2261 from Burkholderia ambifaria (strain ATCC BAA-244 / DSM 16087 / CCUG 44356 / LMG 19182 / AMMD) (Burkholderia cepacia (strain AMMD)).